The primary structure comprises 109 residues: Spermidine export protein MdtI (109 aa).

4 consecutive transmembrane segments (helical) span residues Phe6–Leu26, Val35–Ala55, Ala64–Phe84, and Leu88–Leu108.

Belongs to the drug/metabolite transporter (DMT) superfamily. Small multidrug resistance (SMR) (TC 2.A.7.1) family. MdtI subfamily. Forms a complex with MdtJ.

It is found in the cell inner membrane. Catalyzes the excretion of spermidine. In Yersinia enterocolitica serotype O:8 / biotype 1B (strain NCTC 13174 / 8081), this protein is Spermidine export protein MdtI.